Here is a 195-residue protein sequence, read N- to C-terminus: Recombination protein RecR (195 aa).

A C4-type zinc finger spans residues 53 to 68; sequence CTICHNLDTISPCSIC. The Toprim domain occupies 76 to 171; it reads SIICVVEELG…KVTRLACGIP (96 aa).

The protein belongs to the RecR family.

Its function is as follows. May play a role in DNA repair. It seems to be involved in an RecBC-independent recombinational process of DNA repair. It may act with RecF and RecO. The protein is Recombination protein RecR of Anaplasma marginale (strain St. Maries).